A 435-amino-acid polypeptide reads, in one-letter code: GTPase Obg (435 aa).

Residues 6-164 (ADFVDRVKIF…RWLELELKIL (159 aa)) enclose the Obg domain. An OBG-type G domain is found at 165-335 (ADVGLVGYPN…LVSKLASIVR (171 aa)). GTP is bound by residues 171–178 (GYPNVGKS), 196–200 (FTTLI), 217–220 (DIPG), 287–290 (NKID), and 316–318 (SAL). 2 residues coordinate Mg(2+): serine 178 and threonine 198. The 79-residue stretch at 357–435 (RRLPEKFHLE…IGDFEFEYRE (79 aa)) folds into the OCT domain.

This sequence belongs to the TRAFAC class OBG-HflX-like GTPase superfamily. OBG GTPase family. In terms of assembly, monomer. Mg(2+) is required as a cofactor.

It localises to the cytoplasm. Functionally, an essential GTPase which binds GTP, GDP and possibly (p)ppGpp with moderate affinity, with high nucleotide exchange rates and a fairly low GTP hydrolysis rate. Plays a role in control of the cell cycle, stress response, ribosome biogenesis and in those bacteria that undergo differentiation, in morphogenesis control. This is GTPase Obg from Thermotoga sp. (strain RQ2).